Reading from the N-terminus, the 660-residue chain is Peroxisomal acyl-coenzyme A oxidase 1 (660 aa).

Residue Ser-26 is modified to Phosphoserine. The residue at position 65 (Lys-65) is an N6-acetyllysine. N6-succinyllysine occurs at positions 89 and 90. Positions 139 and 178 each coordinate FAD. N6-acetyllysine is present on Lys-216. The residue at position 241 (Lys-241) is an N6-succinyllysine. 3 positions are modified to N6-acetyllysine: Lys-255, Lys-267, and Lys-272. The residue at position 349 (Lys-349) is an N6-succinyllysine. Catalysis depends on Glu-421, which acts as the Proton acceptor. N6-acetyllysine; alternate is present on residues Lys-437 and Lys-446. Residues Lys-437 and Lys-446 each carry the N6-succinyllysine; alternate modification. Lys-500 carries the post-translational modification N6-acetyllysine. Lys-512 is subject to N6-acetyllysine; alternate. Residue Lys-512 is modified to N6-succinyllysine; alternate. Lys-542 is modified (N6-succinyllysine). An N6-acetyllysine; alternate modification is found at Lys-637. Lys-637 bears the N6-succinyllysine; alternate mark. At Lys-643 the chain carries N6-succinyllysine. Phosphoserine is present on Ser-649. Lys-651 carries the post-translational modification N6-acetyllysine. Position 654 is an N6-succinyllysine (Lys-654). The Microbody targeting signal signature appears at 658–660; the sequence is SKL.

The protein belongs to the acyl-CoA oxidase family. In terms of assembly, homodimer. Interacts with LONP2. FAD serves as cofactor.

Its subcellular location is the peroxisome. The enzyme catalyses a 2,3-saturated acyl-CoA + O2 = a (2E)-enoyl-CoA + H2O2. The catalysed reaction is hexadecanoyl-CoA + O2 = (2E)-hexadecenoyl-CoA + H2O2. It carries out the reaction dodecanoyl-CoA + O2 = (2E)-dodecenoyl-CoA + H2O2. It catalyses the reaction octanoyl-CoA + O2 = (2E)-octenoyl-CoA + H2O2. The enzyme catalyses decanoyl-CoA + O2 = (2E)-decenoyl-CoA + H2O2. The catalysed reaction is tetradecanoyl-CoA + O2 = (2E)-tetradecenoyl-CoA + H2O2. It carries out the reaction hexadecanedioyl-CoA + O2 = (2E)-hexadecenedioyl-CoA + H2O2. It catalyses the reaction tetracosanoyl-CoA + O2 = (2E)-tetracosenoyl-CoA + H2O2. The enzyme catalyses glutaryl-CoA + O2 = (2E)-glutaconyl-CoA + H2O2. The catalysed reaction is hexanoyl-CoA + O2 = (2E)-hexenoyl-CoA + H2O2. It carries out the reaction octadecanoyl-CoA + O2 = (2E)-octadecenoyl-CoA + H2O2. It catalyses the reaction (5Z,8Z,11Z,14Z,17Z)-eicosapentaenoyl-CoA + O2 = (2E,5Z,8Z,11Z,14Z,17Z)-icosahexaenoyl-CoA + H2O2. The enzyme catalyses (6Z,9Z,12Z,15Z,18Z,21Z)-tetracosahexaenoyl-CoA + O2 = (2E,6Z,9Z,12Z,15Z,18Z,21Z)-tetracosaheptaenoyl-CoA + H2O2. It participates in lipid metabolism; peroxisomal fatty acid beta-oxidation. Involved in the initial and rate-limiting step of peroxisomal beta-oxidation of straight-chain saturated and unsaturated very-long-chain fatty acids. Catalyzes the desaturation of fatty acyl-CoAs such as palmitoyl-CoA (hexadecanoyl-CoA) to 2-trans-enoyl-CoAs ((2E)-enoyl-CoAs) such as (2E)-hexadecenoyl-CoA, and donates electrons directly to molecular oxygen (O(2)), thereby producing hydrogen peroxide (H(2)O(2)). In Bos taurus (Bovine), this protein is Peroxisomal acyl-coenzyme A oxidase 1.